The following is a 77-amino-acid chain: Cold shock protein YdfK (77 aa).

It to E.coli YnaE.

The chain is Cold shock protein YdfK (ydfK) from Escherichia coli (strain K12).